The following is a 252-amino-acid chain: 2-C-methyl-D-erythritol 4-phosphate cytidylyltransferase (252 aa).

It belongs to the IspD/TarI cytidylyltransferase family. IspD subfamily.

It catalyses the reaction 2-C-methyl-D-erythritol 4-phosphate + CTP + H(+) = 4-CDP-2-C-methyl-D-erythritol + diphosphate. It participates in isoprenoid biosynthesis; isopentenyl diphosphate biosynthesis via DXP pathway; isopentenyl diphosphate from 1-deoxy-D-xylulose 5-phosphate: step 2/6. In terms of biological role, catalyzes the formation of 4-diphosphocytidyl-2-C-methyl-D-erythritol from CTP and 2-C-methyl-D-erythritol 4-phosphate (MEP). In Chlorobium phaeobacteroides (strain BS1), this protein is 2-C-methyl-D-erythritol 4-phosphate cytidylyltransferase.